A 147-amino-acid polypeptide reads, in one-letter code: Deoxyuridine 5'-triphosphate nucleotidohydrolase (147 aa).

Residue arginine 24 participates in Mg(2+) binding. DUTP contacts are provided by residues 68–70 (PRS), 82–85 (GVID), tyrosine 88, glycine 93, isoleucine 95, and arginine 111.

It belongs to the dUTPase family. Requires Mg(2+) as cofactor.

It catalyses the reaction dUTP + H2O = dUMP + diphosphate + H(+). Its function is as follows. This enzyme is involved in nucleotide metabolism: it produces dUMP, the immediate precursor of thymidine nucleotides and it decreases the intracellular concentration of dUTP so that uracil cannot be incorporated into DNA. This is Deoxyuridine 5'-triphosphate nucleotidohydrolase (OPG046) from Homo sapiens (Human).